The chain runs to 509 residues: Bifunctional purine biosynthesis protein PurH (509 aa).

An MGS-like domain is found at 1 to 144 (MKRALISVSD…KNYAAVTVVV (144 aa)).

This sequence belongs to the PurH family.

The enzyme catalyses (6R)-10-formyltetrahydrofolate + 5-amino-1-(5-phospho-beta-D-ribosyl)imidazole-4-carboxamide = 5-formamido-1-(5-phospho-D-ribosyl)imidazole-4-carboxamide + (6S)-5,6,7,8-tetrahydrofolate. It carries out the reaction IMP + H2O = 5-formamido-1-(5-phospho-D-ribosyl)imidazole-4-carboxamide. It functions in the pathway purine metabolism; IMP biosynthesis via de novo pathway; 5-formamido-1-(5-phospho-D-ribosyl)imidazole-4-carboxamide from 5-amino-1-(5-phospho-D-ribosyl)imidazole-4-carboxamide (10-formyl THF route): step 1/1. The protein operates within purine metabolism; IMP biosynthesis via de novo pathway; IMP from 5-formamido-1-(5-phospho-D-ribosyl)imidazole-4-carboxamide: step 1/1. The protein is Bifunctional purine biosynthesis protein PurH of Listeria welshimeri serovar 6b (strain ATCC 35897 / DSM 20650 / CCUG 15529 / CIP 8149 / NCTC 11857 / SLCC 5334 / V8).